We begin with the raw amino-acid sequence, 212 residues long: Outer surface protein C (212 aa).

The N-terminal stretch at 1 to 18 (MKKNTLSAILMTLFLFIS) is a signal peptide. Residue Cys-19 is the site of N-palmitoyl cysteine attachment. Cys-19 carries S-diacylglycerol cysteine lipidation.

This sequence belongs to the OspC lipoprotein family. Homodimer. Interacts with tick Ixodes ricinus salivary protein Iric-1. Binds human (host) plasminogen. In terms of processing, the N-terminus is blocked.

The protein resides in the cell outer membrane. The protein localises to the cell surface. In terms of biological role, major immunodominant protein in mammalian hosts. Required for initial stages of mammalian infection. Inhibits macrophage-mediated phagocytosis of the bacteria. Binds human plasminogen; this probably confers an extracellular protease activity on the bacteria that allows it to traverse tissue. Unlike closely related strain B31, its interaction with Ixodes ricinus salivary protein Iric-1 does not protect against antibody-mediated destruction in vitro. This is Outer surface protein C from Borreliella afzelii (strain PKo) (Borrelia afzelii).